Here is a 382-residue protein sequence, read N- to C-terminus: Lipid-A-disaccharide synthase (382 aa).

Belongs to the LpxB family.

It catalyses the reaction 2-N,3-O-bis[(3R)-3-hydroxytetradecanoyl]-alpha-D-glucosaminyl 1-phosphate + UDP-2-N,3-O-bis[(3R)-3-hydroxytetradecanoyl]-alpha-D-glucosamine = lipid A disaccharide (E. coli) + UDP + H(+). It carries out the reaction a lipid X + a UDP-2-N,3-O-bis[(3R)-3-hydroxyacyl]-alpha-D-glucosamine = a lipid A disaccharide + UDP + H(+). It functions in the pathway glycolipid biosynthesis; lipid IV(A) biosynthesis; lipid IV(A) from (3R)-3-hydroxytetradecanoyl-[acyl-carrier-protein] and UDP-N-acetyl-alpha-D-glucosamine: step 5/6. Condensation of UDP-2,3-diacylglucosamine and 2,3-diacylglucosamine-1-phosphate to form lipid A disaccharide, a precursor of lipid A, a phosphorylated glycolipid that anchors the lipopolysaccharide to the outer membrane of the cell. The polypeptide is Lipid-A-disaccharide synthase (Escherichia coli O127:H6 (strain E2348/69 / EPEC)).